Reading from the N-terminus, the 231-residue chain is Heptaprenylglyceryl phosphate synthase (231 aa).

Sn-glycerol 1-phosphate is bound at residue K12. Residues D14 and T40 each coordinate Mg(2+). Sn-glycerol 1-phosphate-binding positions include 159–164, G189, and 209–210; these read YLEYSG and GN.

It belongs to the GGGP/HepGP synthase family. Group I subfamily. In terms of assembly, homodimer. Mg(2+) serves as cofactor.

It catalyses the reaction sn-glycerol 1-phosphate + all-trans-heptaprenyl diphosphate = 3-heptaprenyl-sn-glycero-1-phosphate + diphosphate. Its pathway is membrane lipid metabolism; glycerophospholipid metabolism. In terms of biological role, prenyltransferase that catalyzes in vivo the transfer of the heptaprenyl moiety of heptaprenyl pyrophosphate (HepPP; 35 carbon atoms) to the C3 hydroxyl of sn-glycerol-1-phosphate (G1P), producing heptaprenylglyceryl phosphate (HepGP). This reaction is an ether-bond-formation step in the biosynthesis of archaea-type G1P-based membrane lipids found in Bacillales. This Staphylococcus haemolyticus (strain JCSC1435) protein is Heptaprenylglyceryl phosphate synthase.